Consider the following 176-residue polypeptide: Shikimate kinase (176 aa).

ATP is bound at residue 14–19 (GAGKST). Position 18 (Ser-18) interacts with Mg(2+). Substrate is bound by residues Asp-36, Arg-60, and Gly-83. Arg-121 is an ATP binding site. Arg-140 contacts substrate.

Belongs to the shikimate kinase family. In terms of assembly, monomer. The cofactor is Mg(2+).

The protein resides in the cytoplasm. The catalysed reaction is shikimate + ATP = 3-phosphoshikimate + ADP + H(+). It functions in the pathway metabolic intermediate biosynthesis; chorismate biosynthesis; chorismate from D-erythrose 4-phosphate and phosphoenolpyruvate: step 5/7. Its function is as follows. Catalyzes the specific phosphorylation of the 3-hydroxyl group of shikimic acid using ATP as a cosubstrate. The polypeptide is Shikimate kinase (Francisella tularensis subsp. holarctica (strain FTNF002-00 / FTA)).